Reading from the N-terminus, the 787-residue chain is Integrin beta-6 (787 aa).

Positions 1-21 (MGIELLCLFFLFLGRNDHVQG) are cleaved as a signal peptide. The PSI domain maps to 22 to 71 (GCAMGGAETCEDCLLIGPQCAWCSQENFTHLSGVGERCDTPANLLAKGCQ). The Extracellular segment spans residues 22–708 (GCAMGGAETC…KDCPKPPNIP (687 aa)). Intrachain disulfides connect Cys23–Cys41, Cys31–Cys454, Cys34–Cys59, Cys44–Cys70, Cys197–Cys204, Cys252–Cys293, Cys394–Cys406, Cys426–Cys452, Cys456–Cys476, Cys467–Cys479, Cys481–Cys490, Cys492–Cys519, Cys502–Cys517, Cys511–Cys522, Cys524–Cys537, Cys539–Cys560, Cys544–Cys558, Cys552–Cys563, and Cys565–Cys574. N-linked (GlcNAc...) asparagine glycosylation is found at Asn48 and Asn97. The VWFA domain occupies 131-371 (YPVDLYYLMD…QLIISAYEEL (241 aa)). Residues Asp140, Ser142, and Ser144 each contribute to the Mg(2+) site. Ser144, Asp147, Asp148, and Glu179 together coordinate Ca(2+). Residues Asn235, Asp237, Pro239, and Glu240 each coordinate Ca(2+). Residue Glu240 participates in Mg(2+) binding. An N-linked (GlcNAc...) asparagine glycan is attached at Asn260. Positions 271 and 355 each coordinate Ca(2+). N-linked (GlcNAc...) asparagine glycosylation is present at Asn387. A glycan (N-linked (GlcNAc...) asparagine) is linked at Asn418. I-EGF domains follow at residues 456–491 (CQKE…HHCE), 492–538 (CGED…PYCQ), 539–575 (CDNF…EYCN), and 576–615 (CTTS…PACE). 2 N-linked (GlcNAc...) asparagine glycosylation sites follow: Asn463 and Asn471. Asn541 is a glycosylation site (N-linked (GlcNAc...) asparagine). Asn575 carries an N-linked (GlcNAc...) asparagine glycan. 9 disulfide bridges follow: Cys576-Cys599, Cys583-Cys597, Cys591-Cys602, Cys604-Cys614, Cys617-Cys620, Cys624-Cys670, Cys630-Cys649, Cys633-Cys645, and Cys678-Cys701. Residues 709–729 (MIMLGVSLAILLIGVALLCIW) form a helical membrane-spanning segment. The tract at residues 730-757 (KLLVSFHDRKEVAKFEAERSKAKWQTGT) is interaction with HAX1. The Cytoplasmic portion of the chain corresponds to 730 to 787 (KLLVSFHDRKEVAKFEAERSKAKWQTGTNPLYRGSTSTFKNVTYKHKEKQKVDLSTDG).

This sequence belongs to the integrin beta chain family. Heterodimer of an alpha and a beta subunit. Interacts with FLNB. Interacts with HAX1. ITGAV:ITGB6 interacts with FBN1. ITGAV:ITGB6 interacts with TGFB1.

The protein resides in the cell membrane. It is found in the cell junction. It localises to the focal adhesion. Its function is as follows. Integrin alpha-V:beta-6 (ITGAV:ITGB6) is a receptor for fibronectin and cytotactin. It recognizes the sequence R-G-D in its ligands. ITGAV:ITGB6 acts as a receptor for fibrillin-1 (FBN1) and mediates R-G-D-dependent cell adhesion to FBN1. Integrin alpha-V:beta-6 (ITGAV:ITGB6) mediates R-G-D-dependent release of transforming growth factor beta-1 (TGF-beta-1) from regulatory Latency-associated peptide (LAP), thereby playing a key role in TGF-beta-1 activation. The sequence is that of Integrin beta-6 (ITGB6) from Ovis aries (Sheep).